Consider the following 364-residue polypeptide: DNA replication and repair protein RecF (364 aa).

30–37 (GENGSGKT) lines the ATP pocket.

Belongs to the RecF family.

The protein resides in the cytoplasm. In terms of biological role, the RecF protein is involved in DNA metabolism; it is required for DNA replication and normal SOS inducibility. RecF binds preferentially to single-stranded, linear DNA. It also seems to bind ATP. The protein is DNA replication and repair protein RecF of Xylella fastidiosa (strain M12).